Here is a 912-residue protein sequence, read N- to C-terminus: Nonsense-mediated mRNA decay factor SMG8 (912 aa).

Positions 565-630 (EHSNRTPDAS…GEDEDETLEQ (66 aa)) are disordered. Polar residues predominate over residues 570 to 602 (TPDASTHPPMTNENSPHLSGSQKSQDSASNLTF). Residues 604–614 (MDEKRDEENKS) show a composition bias toward basic and acidic residues.

It belongs to the SMG8 family.

Its function is as follows. Involved in nonsense-mediated decay (NMD) of mRNAs containing premature stop codons. Probable component of kinase complex containing SMG1 and recruited to stalled ribosomes. The polypeptide is Nonsense-mediated mRNA decay factor SMG8 (Culex quinquefasciatus (Southern house mosquito)).